The chain runs to 115 residues: Ribosome-binding factor A (115 aa).

This sequence belongs to the RbfA family. As to quaternary structure, monomer. Binds 30S ribosomal subunits, but not 50S ribosomal subunits or 70S ribosomes.

The protein localises to the cytoplasm. In terms of biological role, one of several proteins that assist in the late maturation steps of the functional core of the 30S ribosomal subunit. Associates with free 30S ribosomal subunits (but not with 30S subunits that are part of 70S ribosomes or polysomes). Required for efficient processing of 16S rRNA. May interact with the 5'-terminal helix region of 16S rRNA. In Staphylococcus carnosus (strain TM300), this protein is Ribosome-binding factor A.